The primary structure comprises 507 residues: Eukaryotic translation initiation factor 4E-binding protein Mextli homolog (507 aa).

Positions 126-163 (RPEGQHDPAPTVGIPPSATSPPTQVTSSVTSPVPSSPQ) are disordered. The segment covering 140 to 158 (PPSATSPPTQVTSSVTSPV) has biased composition (low complexity). The KH domain occupies 242-307 (QLRHEMIIRN…EDIERAKDMI (66 aa)). Disordered stretches follow at residues 314 to 360 (NMSP…DEDI) and 395 to 424 (ARPS…QQEP). Polar residues predominate over residues 329 to 348 (QYSGMSSENQSIPSQQNTAN). Residues 349–360 (IDEDDDDDDEDI) show a composition bias toward acidic residues.

Interacts with eukaryotic translation initiation factor ife-3.

It localises to the cytoplasm. Functionally, plays a role in promoting translation. The polypeptide is Eukaryotic translation initiation factor 4E-binding protein Mextli homolog (Caenorhabditis elegans).